A 234-amino-acid chain; its full sequence is Leucyl/phenylalanyl-tRNA--protein transferase (234 aa).

This sequence belongs to the L/F-transferase family.

The protein resides in the cytoplasm. It catalyses the reaction N-terminal L-lysyl-[protein] + L-leucyl-tRNA(Leu) = N-terminal L-leucyl-L-lysyl-[protein] + tRNA(Leu) + H(+). It carries out the reaction N-terminal L-arginyl-[protein] + L-leucyl-tRNA(Leu) = N-terminal L-leucyl-L-arginyl-[protein] + tRNA(Leu) + H(+). The enzyme catalyses L-phenylalanyl-tRNA(Phe) + an N-terminal L-alpha-aminoacyl-[protein] = an N-terminal L-phenylalanyl-L-alpha-aminoacyl-[protein] + tRNA(Phe). Its function is as follows. Functions in the N-end rule pathway of protein degradation where it conjugates Leu, Phe and, less efficiently, Met from aminoacyl-tRNAs to the N-termini of proteins containing an N-terminal arginine or lysine. This Pectobacterium carotovorum subsp. carotovorum (strain PC1) protein is Leucyl/phenylalanyl-tRNA--protein transferase.